Here is a 267-residue protein sequence, read N- to C-terminus: 2-keto-3-deoxy-L-rhamnonate aldolase (267 aa).

The active-site Proton acceptor is the H49. A substrate-binding site is contributed by Q151. E153 serves as a coordination point for Mg(2+). Substrate-binding residues include A178 and D179. Mg(2+) is bound at residue D179.

Belongs to the HpcH/HpaI aldolase family. KDR aldolase subfamily. Homohexamer. The cofactor is Mg(2+).

The enzyme catalyses 2-dehydro-3-deoxy-L-rhamnonate = (S)-lactaldehyde + pyruvate. Catalyzes the reversible retro-aldol cleavage of 2-keto-3-deoxy-L-rhamnonate (KDR) to pyruvate and lactaldehyde. This chain is 2-keto-3-deoxy-L-rhamnonate aldolase, found in Shigella boydii serotype 4 (strain Sb227).